The chain runs to 490 residues: Cytochrome P450 monooxygenase anuE (490 aa).

C405 contacts heme.

Belongs to the cytochrome P450 family. Heme is required as a cofactor.

It carries out the reaction 2-hydroxymethyl-3-pentylphenol + reduced [NADPH--hemoprotein reductase] + O2 = (8S)-annullatin E + oxidized [NADPH--hemoprotein reductase] + H2O + H(+). The protein operates within secondary metabolite biosynthesis. Its function is as follows. Cytochrome P450 monooxygenase; part of the gene cluster that mediates the biosynthesis of annullatin D, an alkylated aromatic polyketide with a fused dihydrobenzofuran lactone ring system that exhibits potent agonistic activities toward the cannabinoid receptors. Within the pathway, anuE catalyzes the hydroxylation of 2-hydroxymethyl-3-pentylphenol at the side chain to produce (8S)-annullatin E. The annullatin backbone 2-hydroxymethyl-3-pentylphenol is assembled from one acetyl-CoA starter unit and 5 malonyl-CoA elongation units by cooperation of the highly reducing polyketide synthase anuA, the short-chain dehydrogenase anuB and the oxidoreductase anuC, before being hydroxylated at the C-5 alkyl chain by the cytochrome P450 monooxygenase anuE to form (8S)-annullatin E. The prenyltransferase anuH subsequently installs one isoprenyl group at the benzene ring to form (8S)-annullatin J. Enzymatic or nonenzymatic dihydro-benzofuran ring formation between the prenyl and the phenolic hydroxyl groups in (8S)-annullatin J results in two diastereomers (2S,9S)-annullatin H and compound 12. The intermediate (2S,9S)-annullatin H is then converted to (2S,9S)-annullatin D by the FAD-linked oxidoreductase anuG-catalyzed five-member lactone ring formation. The isomer 12 acts as a substrate for the short-chain dehydrogenase anuF and is oxidized to (2R)-annullatin F, which is subsequently acetylated by an acetyltransferase leading to (2R)-annullatin G formation. The remaining enzymes identified within the cluster, anuD, anuI and anuJ, seem not to be involved in annullatin biosynthesis. The sequence is that of Cytochrome P450 monooxygenase anuE from Penicillium roqueforti (strain FM164).